The following is a 215-amino-acid chain: Protein GET1 (215 aa).

The Lumenal segment spans residues 1–4 (MPSL). Residues 5 to 24 (LILIFTIEVAVELINTIGAA) form a helical membrane-spanning segment. At 25-110 (TINNLLWRIF…NFDKYITGIR (86 aa)) the chain is on the cytoplasmic side. Residues 72–104 (AKWAKLRRQHDKLLEQLEKKKAALDSTKGNFDK) adopt a coiled-coil conformation. A helical membrane pass occupies residues 111-131 (WVGTQGLRYFLPFWYAKVPMF). Residues 132-155 (WLPYGWFPYYAEWLVSFPRAPMGS) lie on the Lumenal side of the membrane. A helical transmembrane segment spans residues 156-172 (VSIASWQLACTGFVVLI). The Cytoplasmic portion of the chain corresponds to 173–215 (KDAITALVVFVMGMRQSNVKQAVPVKAVSGEKASDEKEGKKEL).

Belongs to the WRB/GET1 family. In terms of assembly, interacts with GET3.

The protein resides in the endoplasmic reticulum membrane. In terms of biological role, required for the post-translational delivery of tail-anchored (TA) proteins to the endoplasmic reticulum. Acts as a membrane receptor for soluble GET3, which recognizes and selectively binds the transmembrane domain of TA proteins in the cytosol. This chain is Protein GET1, found in Pyricularia oryzae (strain 70-15 / ATCC MYA-4617 / FGSC 8958) (Rice blast fungus).